We begin with the raw amino-acid sequence, 582 residues long: Cryptochrome-2 (582 aa).

One can recognise a Photolyase/cryptochrome alpha/beta domain in the interval Cys12–Leu141. FAD-binding positions include Ser261, Gln298, His364, and Asp396–Asp398. The tract at residues Gly521–Cys559 is disordered. Over residues Ala527–Ala546 the composition is skewed to polar residues.

The protein belongs to the DNA photolyase class-1 family. Component of the circadian core oscillator, which includes the CRY proteins, CLOCK or NPAS2, BMAL1 or BMAL2, CSNK1E, and the PER proteins. FAD serves as cofactor. (6R)-5,10-methylene-5,6,7,8-tetrahydrofolate is required as a cofactor. In terms of tissue distribution, expressed in the pineal gland.

It is found in the cytoplasm. The protein resides in the nucleus. In terms of biological role, transcriptional repressor which forms a core component of the circadian clock. The circadian clock, an internal time-keeping system, regulates various physiological processes through the generation of approximately 24 hour circadian rhythms in gene expression, which are translated into rhythms in metabolism and behavior. It is derived from the Latin roots 'circa' (about) and 'diem' (day) and acts as an important regulator of a wide array of physiological functions including metabolism, sleep, body temperature, blood pressure, endocrine, immune, cardiovascular, and renal function. Consists of two major components: the central clock, residing in the suprachiasmatic nucleus (SCN) of the brain, and the peripheral clocks that are present in nearly every tissue and organ system. Both the central and peripheral clocks can be reset by environmental cues, also known as Zeitgebers (German for 'timegivers'). The predominant Zeitgeber for the central clock is light, which is sensed by retina and signals directly to the SCN. The central clock entrains the peripheral clocks through neuronal and hormonal signals, body temperature and feeding-related cues, aligning all clocks with the external light/dark cycle. Circadian rhythms allow an organism to achieve temporal homeostasis with its environment at the molecular level by regulating gene expression to create a peak of protein expression once every 24 hours to control when a particular physiological process is most active with respect to the solar day. Transcription and translation of core clock components (CLOCK, NPAS2, BMAL1, BMAL2, PER1, PER2, PER3, CRY1 and CRY2) plays a critical role in rhythm generation, whereas delays imposed by post-translational modifications (PTMs) are important for determining the period (tau) of the rhythms (tau refers to the period of a rhythm and is the length, in time, of one complete cycle). A diurnal rhythm is synchronized with the day/night cycle, while the ultradian and infradian rhythms have a period shorter and longer than 24 hours, respectively. Disruptions in the circadian rhythms contribute to the pathology of cardiovascular diseases, cancer, metabolic syndromes and aging. A transcription/translation feedback loop (TTFL) forms the core of the molecular circadian clock mechanism. Transcription factors, CLOCK or NPAS2 and BMAL1 or BMAL2, form the positive limb of the feedback loop, act in the form of a heterodimer and activate the transcription of core clock genes and clock-controlled genes (involved in key metabolic processes), harboring E-box elements (5'-CACGTG-3') within their promoters. The core clock genes: PER1/2/3 and CRY1/2 which are transcriptional repressors form the negative limb of the feedback loop and interact with the CLOCK|NPAS2-BMAL1|BMAL2 heterodimer inhibiting its activity and thereby negatively regulating their own expression. This heterodimer also activates nuclear receptors NR1D1/2, RORA/B/G, which form a second feedback loop and which activate and repress BMAL1 transcription, respectively. CRY1 and CRY2 have redundant functions but also differential and selective contributions at least in defining the pace of the SCN circadian clock and its circadian transcriptional outputs. Less potent transcriptional repressor in cerebellum and liver than CRY1, though less effective in lengthening the period of the SCN oscillator. Seems to play a critical role in tuning SCN circadian period by opposing the action of CRY1. With CRY1, dispensable for circadian rhythm generation but necessary for the development of intercellular networks for rhythm synchrony. Represses CLOCK-BMAL1-mediated transcriptional activation. The chain is Cryptochrome-2 (CRY2) from Gallus gallus (Chicken).